A 334-amino-acid polypeptide reads, in one-letter code: Small ribosomal subunit protein uS2 (334 aa).

It belongs to the universal ribosomal protein uS2 family.

The chain is Small ribosomal subunit protein uS2 from Xanthobacter autotrophicus (strain ATCC BAA-1158 / Py2).